Here is a 270-residue protein sequence, read N- to C-terminus: uncharacterized protein (270 aa).

Disordered regions lie at residues 35 to 67 and 168 to 204; these read IKQDNNNNNNNNTNVSLSPSIKSQATSSTGGNK and SNNNNNNNNNNNNNNNNNNNNNNNNDDDQQKDIDNSN. Residues 39 to 48 are compositionally biased toward low complexity; the sequence is NNNNNNNNTN. Positions 49–67 are enriched in polar residues; sequence VSLSPSIKSQATSSTGGNK. Over residues 168-191 the composition is skewed to low complexity; it reads SNNNNNNNNNNNNNNNNNNNNNNN.

This is an uncharacterized protein from Dictyostelium discoideum (Social amoeba).